Here is a 608-residue protein sequence, read N- to C-terminus: Elongation factor 4 (608 aa).

Residues 11–193 (SHIRNFSIVA…AIVHKLPAPK (183 aa)) enclose the tr-type G domain. GTP is bound by residues 23-28 (DHGKST) and 140-143 (NKID).

It belongs to the TRAFAC class translation factor GTPase superfamily. Classic translation factor GTPase family. LepA subfamily.

The protein resides in the cell inner membrane. It catalyses the reaction GTP + H2O = GDP + phosphate + H(+). In terms of biological role, required for accurate and efficient protein synthesis under certain stress conditions. May act as a fidelity factor of the translation reaction, by catalyzing a one-codon backward translocation of tRNAs on improperly translocated ribosomes. Back-translocation proceeds from a post-translocation (POST) complex to a pre-translocation (PRE) complex, thus giving elongation factor G a second chance to translocate the tRNAs correctly. Binds to ribosomes in a GTP-dependent manner. The chain is Elongation factor 4 from Rhizobium meliloti (strain 1021) (Ensifer meliloti).